Reading from the N-terminus, the 537-residue chain is CTP synthase (537 aa).

Positions 1-265 are amidoligase domain; that stretch reads MVHFIFVTGG…DNKVLKFFNI (265 aa). Ser13 lines the CTP pocket. Ser13 contributes to the UTP binding site. ATP is bound by residues 14–19 and Asp71; that span reads SLGKGL. 2 residues coordinate Mg(2+): Asp71 and Glu139. CTP-binding positions include 146–148 and Lys222; that span reads DIE. Lys222 is a binding site for UTP. The region spanning 290 to 536 is the Glutamine amidotransferase type-1 domain; the sequence is RIAIIAKYHK…IKAAIEYNKC (247 aa). Gly352 contributes to the L-glutamine binding site. Cys379 functions as the Nucleophile; for glutamine hydrolysis in the catalytic mechanism. Residues 380-383, Glu403, and Arg464 contribute to the L-glutamine site; that span reads FGMQ. Catalysis depends on residues His509 and Glu511.

The protein belongs to the CTP synthase family. As to quaternary structure, homotetramer.

The catalysed reaction is UTP + L-glutamine + ATP + H2O = CTP + L-glutamate + ADP + phosphate + 2 H(+). It catalyses the reaction L-glutamine + H2O = L-glutamate + NH4(+). The enzyme catalyses UTP + NH4(+) + ATP = CTP + ADP + phosphate + 2 H(+). It participates in pyrimidine metabolism; CTP biosynthesis via de novo pathway; CTP from UDP: step 2/2. With respect to regulation, allosterically activated by GTP, when glutamine is the substrate; GTP has no effect on the reaction when ammonia is the substrate. The allosteric effector GTP functions by stabilizing the protein conformation that binds the tetrahedral intermediate(s) formed during glutamine hydrolysis. Inhibited by the product CTP, via allosteric rather than competitive inhibition. Catalyzes the ATP-dependent amination of UTP to CTP with either L-glutamine or ammonia as the source of nitrogen. Regulates intracellular CTP levels through interactions with the four ribonucleotide triphosphates. This Rickettsia rickettsii (strain Iowa) protein is CTP synthase.